The chain runs to 283 residues: MPGFFCDCWPSLEIRALLYAMGCIQSIGGKARVFREGITVIDVKASIDPVPTSIDESSSVVLRYRTPHFRASAQVVMPPIPKKETWVVGWIQACSHMEFYNQYGEQGMSSWELPDLQEGKIQAISDSDGVNYPWYGNTTETCTIVGPTKRDSKFIISMNDNFYPSVTWAVPVSESNVAKLTNIYRDQSFTTWLVATNTSTNDMIILQTLHWRMQLSIEVNPNRPLGQRARLREPIAQDQPKILSKNEPIPPSALVKPNANDAQVLMWRPKYGQPLVVIPPKHR.

Belongs to the FAM78 family.

In Homo sapiens (Human), this protein is Protein FAM78A (FAM78A).